Consider the following 506-residue polypeptide: MSQSRARKVLIVGAGPVGALTALSLHRRGWEVEVWETRDDPRGQDAAPSNLRSINLAISSRGLEALRSVDPSIAENFLEEAIPMKGRMIHHTDGKQESQLYDPIGGQSINSISRPILNQRLVQSLPEAVKLRFNTKLKHIDFKNRVAYASHKQETSLLPGEESEKDKKQNTEDEDGTAFDLVIGCDGSWSKVRTAMMRAERIDFSQSFIPHAYIELHMPSDPAFPGGYAMDKNHLHIWPRHAFMLIGLPNKDGSFTLTLFIPFSSLELLDTRESAAAFFREHFPSAVDIVGEKVLLDDFEKNPRGNLVTINCTPSAWSSHAILLGDASHSMVPFYGQGLNCGLEDVRVLSSILERHHISPTTTLALGETDPELELALKAYSDERQGDLKAICELALQNYTEMRSHVLSPLHHLRRQVDKVFTTLFRSAPQATLSLMEPFPTKKVRGWTSLYEMVTFRPDVGYSEALRKERWQKDVVGYAGWIGGVVGVGAAGVFAATMAKKWLERR.

The tract at residues 153–174 is disordered; sequence QETSLLPGEESEKDKKQNTEDE. Over residues 162 to 171 the composition is skewed to basic and acidic residues; sequence ESEKDKKQNT.

This sequence belongs to the aromatic-ring hydroxylase family. KMO subfamily. The cofactor is FAD.

It is found in the mitochondrion outer membrane. The catalysed reaction is L-kynurenine + NADPH + O2 + H(+) = 3-hydroxy-L-kynurenine + NADP(+) + H2O. The protein operates within cofactor biosynthesis; NAD(+) biosynthesis; quinolinate from L-kynurenine: step 1/3. Catalyzes the hydroxylation of L-kynurenine (L-Kyn) to form 3-hydroxy-L-kynurenine (L-3OHKyn). Required for synthesis of quinolinic acid. The chain is Kynurenine 3-monooxygenase from Cryptococcus neoformans var. neoformans serotype D (strain JEC21 / ATCC MYA-565) (Filobasidiella neoformans).